Consider the following 742-residue polypeptide: Collectin-12 (742 aa).

Residues 1–37 (MKDDFAEEEEVQSFGYKRFGIQEGTQCTKCKNNWALK) are Cytoplasmic-facing. A helical; Signal-anchor for type II membrane protein transmembrane segment spans residues 38 to 58 (FSIILLYILCVLLTITIAILG). Over 59–742 (YKVVEKMDNV…DMDKEQIFGV (684 aa)) the chain is Extracellular. Coiled-coil stretches lie at residues 71–101 (GLET…GQKA) and 271–334 (NNSA…QLEE). The tract at residues 439-605 (TILQGPPGPR…SEPTSVPEAN (167 aa)) is disordered. Collagen-like domains lie at 467–526 (GQKG…SGDP) and 527–586 (GPPG…PGPP). The segment covering 475 to 492 (PGPPGPAGEKGPPGPIGP) has biased composition (pro residues). 2 stretches are compositionally biased toward low complexity: residues 502–522 (RGSP…LPGP) and 532–556 (QGKD…VGEP). Over residues 571-589 (PGLPGPKGPPGPPGPPGPG) the composition is skewed to pro residues. 3 disulfides stabilise this stretch: Cys-607-Cys-618, Cys-635-Cys-730, and Cys-708-Cys-722. A C-type lectin domain is found at 614–731 (YTEKCYYFSI…CEDVNNFICE (118 aa)). Ca(2+)-binding residues include Ile-644, Asn-646, Glu-650, Asp-670, and Glu-674. Positions 691, 694, and 696 each coordinate a carbohydrate. Ca(2+) is bound by residues Gln-694, Asp-696, Asn-697, Glu-706, Asp-707, Asn-718, Asp-719, and Glu-731. Glu-706 provides a ligand contact to a carbohydrate. 2 residues coordinate a carbohydrate: Asn-718 and Asp-719.

In terms of tissue distribution, widely expressed.

The protein localises to the membrane. Its function is as follows. Scavenger receptor that displays several functions associated with host defense. Binds to carbohydrates. The sequence is that of Collectin-12 (COLEC12) from Gallus gallus (Chicken).